We begin with the raw amino-acid sequence, 214 residues long: Ribonuclease HII (214 aa).

One can recognise an RNase H type-2 domain in the interval 26–214 (EIVCGVDEAG…PVREAFDLIR (189 aa)). Residues aspartate 32, glutamate 33, and aspartate 124 each coordinate a divalent metal cation.

It belongs to the RNase HII family. It depends on Mn(2+) as a cofactor. The cofactor is Mg(2+).

The protein localises to the cytoplasm. The catalysed reaction is Endonucleolytic cleavage to 5'-phosphomonoester.. In terms of biological role, endonuclease that specifically degrades the RNA of RNA-DNA hybrids. This chain is Ribonuclease HII, found in Burkholderia thailandensis (strain ATCC 700388 / DSM 13276 / CCUG 48851 / CIP 106301 / E264).